A 117-amino-acid polypeptide reads, in one-letter code: UPF0102 protein Swoo_0351 (117 aa).

Belongs to the UPF0102 family.

The protein is UPF0102 protein Swoo_0351 of Shewanella woodyi (strain ATCC 51908 / MS32).